Here is a 325-residue protein sequence, read N- to C-terminus: MATH domain and coiled-coil domain-containing protein At3g58430 (325 aa).

Residues 6-131 (HKKFCWIIKN…KGDFKIIAEV (126 aa)) form the MATH domain. The stretch at 258-306 (FKVDWLEKKLDQVKDKKEREQSGLARLHELEEYLLKLKQKCSNLDLLVE) forms a coiled coil.

The sequence is that of MATH domain and coiled-coil domain-containing protein At3g58430 from Arabidopsis thaliana (Mouse-ear cress).